The chain runs to 373 residues: Probable ethanolamine permease EutH (373 aa).

Helical transmembrane passes span 5-25, 38-58, 61-81, 111-131, 143-163, 166-186, 197-217, 236-256, 307-327, and 331-351; these read EIIIYLMVIFMILGAIDKIIG, IMAMGSLTLAMVGIITLAPVL, ILSPIVVPIYTALGADPAMFA, ILGSMMGPTIVFTIPVALGII, VLSGIITIPIGCLIGGLVAGF, IMIFKNLVPIILVAALIMLGL, FTIFGKGVVIVATIGLVAGAI, IEIVGGIALVLAGAFCLVFVI, VAFAVSAAFVLGDHLGFTAGV, and MIFPMIVGKLVGGVTAVAVGI.

This sequence belongs to the EutH family.

The protein localises to the cell membrane. The enzyme catalyses ethanolamine(in) = ethanolamine(out). In terms of biological role, probably involved in the diffusion of protonated ethanolamine (EA) into the cell at low pH. At low pH most EA is protonated, and this permease becomes necessary. Contributes to bacterial survival and replication in acidic macrophage vacuoles, but not to bacterial uptake by macrophages. In Listeria monocytogenes serotype 1/2a (strain 10403S), this protein is Probable ethanolamine permease EutH.